A 174-amino-acid chain; its full sequence is MDVVKKSRNTHGSNDFSELIVSVRRVAKVVKGGRRFSFSVLVVIGDEKGKVGCGIGKHLEVSEAKVKAVNAARKNMIRVHLRESRTLHHDIQAKFCSSKVMLRSAKVGTGIIAGGSIRLIFEVLGVQDVVAKSIGSSNPHNVVYAVFTAFRKMLSPKQVASKRSRKIGEIIENR.

Positions 16–79 (FSELIVSVRR…NAARKNMIRV (64 aa)) constitute an S5 DRBM domain.

Belongs to the universal ribosomal protein uS5 family. In terms of assembly, part of the 30S ribosomal subunit. Contacts proteins S4 and S8.

Functionally, with S4 and S12 plays an important role in translational accuracy. Its function is as follows. Located at the back of the 30S subunit body where it stabilizes the conformation of the head with respect to the body. The protein is Small ribosomal subunit protein uS5 of Ehrlichia ruminantium (strain Gardel).